The sequence spans 330 residues: Protein FAM170A (330 aa).

Disordered stretches follow at residues 1–54 (MKRR…VTST), 76–104 (HRDS…HVSL), and 169–218 (VGTP…AKTP). Residues 174–185 (SDVSTRNLLSDS) show a composition bias toward polar residues. Basic and acidic residues predominate over residues 189 to 200 (GEEKEHEERTES). Thr217 carries the phosphothreonine modification. The C2H2-type; degenerate zinc finger occupies 228–252 (FRCMACCRVFTTMEALQEHVQFGIR). Residues 270–330 (NMESESTQDE…VFHSPKDRNS (61 aa)) are disordered. A compositionally biased stretch (acidic residues) spans 275-293 (STQDEQEEENGNEKEEEEK). The residue at position 315 (Ser315) is a Phosphoserine.

This sequence belongs to the FAM170 family. In terms of tissue distribution, expressed strongly in testis and brain and weakly in prostate, spleen, pancreas and uterus.

Its subcellular location is the nucleus. In terms of biological role, acts as a nuclear transcription factor that positively regulates the expression of heat shock genes. Binds to heat shock promoter elements (HSE). In Homo sapiens (Human), this protein is Protein FAM170A (FAM170A).